We begin with the raw amino-acid sequence, 158 residues long: Cyclic pyranopterin monophosphate synthase (158 aa).

Substrate-binding positions include 73–75 and 110–111; these read LCH and ME. Residue D125 is part of the active site.

This sequence belongs to the MoaC family. As to quaternary structure, homohexamer; trimer of dimers.

It catalyses the reaction (8S)-3',8-cyclo-7,8-dihydroguanosine 5'-triphosphate = cyclic pyranopterin phosphate + diphosphate. Its pathway is cofactor biosynthesis; molybdopterin biosynthesis. In terms of biological role, catalyzes the conversion of (8S)-3',8-cyclo-7,8-dihydroguanosine 5'-triphosphate to cyclic pyranopterin monophosphate (cPMP). In Azotobacter vinelandii (strain DJ / ATCC BAA-1303), this protein is Cyclic pyranopterin monophosphate synthase.